The primary structure comprises 156 residues: Small ribosomal subunit protein uS7 (156 aa).

This sequence belongs to the universal ribosomal protein uS7 family. As to quaternary structure, part of the 30S ribosomal subunit. Contacts proteins S9 and S11.

Its function is as follows. One of the primary rRNA binding proteins, it binds directly to 16S rRNA where it nucleates assembly of the head domain of the 30S subunit. Is located at the subunit interface close to the decoding center, probably blocks exit of the E-site tRNA. In Bifidobacterium longum subsp. infantis (strain ATCC 15697 / DSM 20088 / JCM 1222 / NCTC 11817 / S12), this protein is Small ribosomal subunit protein uS7.